We begin with the raw amino-acid sequence, 57 residues long: UPF0057 membrane protein T23F2.3 (57 aa).

2 helical membrane passes run 4-24 and 36-56; these read TCTDIPKFICAVLLPPIGVFL and ILLTILGYIPGIIYACYVILA.

This sequence belongs to the UPF0057 (PMP3) family.

It localises to the membrane. The protein is UPF0057 membrane protein T23F2.3 of Caenorhabditis elegans.